Here is a 469-residue protein sequence, read N- to C-terminus: Probable Xaa-Pro aminopeptidase PEPP (469 aa).

Mn(2+) contacts are provided by aspartate 257, aspartate 268, glutamate 391, and glutamate 436.

The protein belongs to the peptidase M24B family. It depends on Mn(2+) as a cofactor.

It carries out the reaction Release of any N-terminal amino acid, including proline, that is linked to proline, even from a dipeptide or tripeptide.. Its function is as follows. Catalyzes the removal of a penultimate prolyl residue from the N-termini of peptides. In Fusarium vanettenii (strain ATCC MYA-4622 / CBS 123669 / FGSC 9596 / NRRL 45880 / 77-13-4) (Fusarium solani subsp. pisi), this protein is Probable Xaa-Pro aminopeptidase PEPP (PEPP).